Consider the following 291-residue polypeptide: Elongation factor Ts (291 aa).

Positions 80 to 83 (TDFV) are involved in Mg(2+) ion dislocation from EF-Tu.

Belongs to the EF-Ts family.

The protein resides in the cytoplasm. Associates with the EF-Tu.GDP complex and induces the exchange of GDP to GTP. It remains bound to the aminoacyl-tRNA.EF-Tu.GTP complex up to the GTP hydrolysis stage on the ribosome. This Ligilactobacillus salivarius (strain UCC118) (Lactobacillus salivarius) protein is Elongation factor Ts.